The primary structure comprises 500 residues: Coiled-coil domain-containing protein 85A (500 aa).

Positions 1-23 (MSKAAGGSAPAAESCPSAPAGAS) are enriched in low complexity. The disordered stretch occupies residues 1-30 (MSKAAGGSAPAAESCPSAPAGASTPTGVDD). Coiled coils occupy residues 38–104 (ELLQ…RDLC) and 132–171 (MHKE…DEEK). Disordered regions lie at residues 200–405 (RDVG…SGMN) and 426–465 (NRML…QPEP). The span at 204–215 (DGSSTSSTGSTD) shows a compositional bias: low complexity. Over residues 231 to 254 (HLQKPRSEGSPEHTKHRSTSPEHL) the composition is skewed to basic and acidic residues. Residues 372 to 381 (GSGGSGGGSR) show a composition bias toward gly residues. Positions 383-395 (GTLRRPAQEDSSS) are enriched in basic and acidic residues. Residues 404 to 429 (MNESTLSYVRQLEARVRQLEEENRML) adopt a coiled-coil conformation. A compositionally biased stretch (polar residues) spans 434–463 (FRLSSGADGNNSSLNSPASFSGHTTPSQQP). R488 carries the asymmetric dimethylarginine modification.

Belongs to the CCDC85 family. In terms of assembly, may interact with ARVCF; CTNND1; CTNND2 and PKP4.

The protein localises to the cell junction. Its subcellular location is the adherens junction. May play a role in cell-cell adhesion and epithelium development through its interaction with proteins of the beta-catenin family. This is Coiled-coil domain-containing protein 85A (Ccdc85a) from Mus musculus (Mouse).